The primary structure comprises 48 residues: uncharacterized protein (48 aa).

This is an uncharacterized protein from Acidianus filamentous virus 2 (isolate Italy/Pozzuoli) (AFV-2).